Reading from the N-terminus, the 472-residue chain is Eukaryotic translation initiation factor 2 subunit 3, X-linked (472 aa).

Ala-2 bears the N-acetylalanine mark. Ser-16 carries the post-translational modification Phosphoserine. The tr-type G domain maps to 39–248 (QATINIGTIG…IVKKIPVPPR (210 aa)). Positions 48–55 (GHVAHGKS) are G1. 51 to 56 (AHGKST) serves as a coordination point for GTP. Residues 76–80 (NITIK) form a G2 region. The G3 stretch occupies residues 134–137 (DCPG). GTP-binding positions include 190–193 (NKID) and 225–227 (SAQ). Positions 190-193 (NKID) are G4. Residues 225-227 (SAQ) form a G5 region. Residues 457–469 (GQIRRGVTIKPTV) are interacts with Cdc123.

This sequence belongs to the TRAFAC class translation factor GTPase superfamily. Classic translation factor GTPase family. EIF2G subfamily. Eukaryotic translation initiation factor 2 eIF2 is a heterotrimeric complex composed of an alpha (EIF2S1), a beta (EIF2S2) and a gamma (EIF2S3) chain. eIF2 is member of the 43S pre-initiation complex (43S PIC). Interacts (via C-terminus) with CDC123; the interaction is direct. As to expression, widely expressed. In the brain, high mRNA levels are observed in specific regions, including the habenula, anterodorsal thalamic nucleus, hippocampus, hypothalamus, and cerebellum. Also expressed in the embryonic brain. There is a differential expression between males and females, which is tissue-specific. Females tend to have higher expression levels than males in the brain (cortex, hippocampus and paraventricular nucleus, but not in the habenula), as well as in other tissues. The up-regulation observed in females at the mRNA level may be due to the presence of 2 active copies of the gene.

The protein resides in the cytoplasm. It is found in the cytosol. It catalyses the reaction GTP + H2O = GDP + phosphate + H(+). Functionally, member of the eIF2 complex that functions in the early steps of protein synthesis by forming a ternary complex with GTP and initiator tRNA. This complex binds to a 40S ribosomal subunit, followed by mRNA binding to form the 43S pre-initiation complex (43S PIC). Junction of the 60S ribosomal subunit to form the 80S initiation complex is preceded by hydrolysis of the GTP bound to eIF2 and release of an eIF2-GDP binary complex. In order for eIF2 to recycle and catalyze another round of initiation, the GDP bound to eIF2 must exchange with GTP by way of a reaction catalyzed by eIF-2B. Along with its paralog on chromosome Y, may contribute to spermatogenesis up to the round spermatid stage. This Mus musculus (Mouse) protein is Eukaryotic translation initiation factor 2 subunit 3, X-linked (Eif2s3x).